Consider the following 185-residue polypeptide: Elongation factor P (185 aa).

The protein belongs to the elongation factor P family.

Its subcellular location is the cytoplasm. Its pathway is protein biosynthesis; polypeptide chain elongation. Its function is as follows. Involved in peptide bond synthesis. Stimulates efficient translation and peptide-bond synthesis on native or reconstituted 70S ribosomes in vitro. Probably functions indirectly by altering the affinity of the ribosome for aminoacyl-tRNA, thus increasing their reactivity as acceptors for peptidyl transferase. This Endomicrobium trichonymphae protein is Elongation factor P.